The following is a 332-amino-acid chain: MADRSRIRGFLREEHVTYASILLYITLSSGQIFFNKWVLSSKEINFPYPLGLTLLHMTFSSVLCFLLTKVFKVMKVEEGMTLEIYVTSVIPIGAMFAMTLWLGNTAYLYITVAFSQMLKAIMPVAVFILGVCVGLEIMSCKMLLIMSVISFGVLVSSYGELNINWVGVVYQMGGIVSEALRLILMEILVKRKGIKLNPLSLMYYMSPCSAICLFIPWIFLEKSKMDTWNFHVLVLSLNSLCTFALNLSVFLVISRTSALTIRIAGVVKDWLVVLVSALLFAETKLTIINLFGYAVAIVGVATYNNHKPKNGESITLVSQSPKNSDKKPDGPL.

10 consecutive transmembrane segments (helical) span residues 19–39 (ASIL…KWVL), 46–66 (FPYP…LCFL), 82–102 (LEIY…TLWL), 120–140 (AIMP…IMSC), 143–163 (LLIM…ELNI), 165–185 (WVGV…LILM), 199–219 (LSLM…PWIF), 233–253 (LVLS…FLVI), 259–281 (LTIR…LLFA), and 285–304 (LTII…ATYN). Polar residues predominate over residues 312–322 (ESITLVSQSPK). The interval 312–332 (ESITLVSQSPKNSDKKPDGPL) is disordered. Positions 323 to 332 (NSDKKPDGPL) are enriched in basic and acidic residues.

The protein belongs to the TPT transporter family. TPT (TC 2.A.7.9) subfamily.

It localises to the membrane. In Arabidopsis thaliana (Mouse-ear cress), this protein is Probable sugar phosphate/phosphate translocator At1g53660.